The sequence spans 228 residues: MSQWFQLGLQNGNSPLMEQLIFFHDHALLVVILITSLVGFFLAALFSNKFLHRYLLDGQAIETVWTVIPAIILVAIALPSIRLLYLIDEIHNPALTIKVTGHQWYWSYEYSDLNDIQFDSYMIPSNELSTGMYRLLDVDNRSQCPMIKAIRLMITSDAVLHSWAVPSLGIKMDADPGRLNQSSLLVNMPGVFYGQCSEICGSGHSFMPIVIEAVGESDFLKWLELQIS.

Over 1–26 (MSQWFQLGLQNGNSPLMEQLIFFHDH) the chain is Mitochondrial intermembrane. A helical transmembrane segment spans residues 27-48 (ALLVVILITSLVGFFLAALFSN). At 49 to 62 (KFLHRYLLDGQAIE) the chain is on the mitochondrial matrix side. The chain crosses the membrane as a helical span at residues 63-82 (TVWTVIPAIILVAIALPSIR). Over 83 to 228 (LLYLIDEIHN…FLKWLELQIS (146 aa)) the chain is Mitochondrial intermembrane. Positions 161, 196, 198, 200, 204, and 207 each coordinate Cu cation. E198 lines the Mg(2+) pocket.

Belongs to the cytochrome c oxidase subunit 2 family. Component of the cytochrome c oxidase (complex IV, CIV), a multisubunit enzyme composed of a catalytic core of 3 subunits and several supernumerary subunits. The complex exists as a monomer or a dimer and forms supercomplexes (SCs) in the inner mitochondrial membrane with ubiquinol-cytochrome c oxidoreductase (cytochrome b-c1 complex, complex III, CIII). Cu cation is required as a cofactor.

It is found in the mitochondrion inner membrane. It catalyses the reaction 4 Fe(II)-[cytochrome c] + O2 + 8 H(+)(in) = 4 Fe(III)-[cytochrome c] + 2 H2O + 4 H(+)(out). Functionally, component of the cytochrome c oxidase, the last enzyme in the mitochondrial electron transport chain which drives oxidative phosphorylation. The respiratory chain contains 3 multisubunit complexes succinate dehydrogenase (complex II, CII), ubiquinol-cytochrome c oxidoreductase (cytochrome b-c1 complex, complex III, CIII) and cytochrome c oxidase (complex IV, CIV), that cooperate to transfer electrons derived from NADH and succinate to molecular oxygen, creating an electrochemical gradient over the inner membrane that drives transmembrane transport and the ATP synthase. Cytochrome c oxidase is the component of the respiratory chain that catalyzes the reduction of oxygen to water. Electrons originating from reduced cytochrome c in the intermembrane space (IMS) are transferred via the dinuclear copper A center (CU(A)) of subunit 2 and heme A of subunit 1 to the active site in subunit 1, a binuclear center (BNC) formed by heme A3 and copper B (CU(B)). The BNC reduces molecular oxygen to 2 water molecules using 4 electrons from cytochrome c in the IMS and 4 protons from the mitochondrial matrix. This is Cytochrome c oxidase subunit 2 (COII) from Artemia franciscana (Brine shrimp).